A 121-amino-acid chain; its full sequence is Large ribosomal subunit protein bL12 (121 aa).

Belongs to the bacterial ribosomal protein bL12 family. As to quaternary structure, homodimer. Part of the ribosomal stalk of the 50S ribosomal subunit. Forms a multimeric L10(L12)X complex, where L10 forms an elongated spine to which 2 to 4 L12 dimers bind in a sequential fashion. Binds GTP-bound translation factors.

In terms of biological role, forms part of the ribosomal stalk which helps the ribosome interact with GTP-bound translation factors. Is thus essential for accurate translation. This Psychromonas ingrahamii (strain DSM 17664 / CCUG 51855 / 37) protein is Large ribosomal subunit protein bL12.